The primary structure comprises 777 residues: Lon protease (777 aa).

Residues 11-204 (IPVLPLRDVV…FLMAIMESEI (194 aa)) form the Lon N-terminal domain. 356–363 (GPPGVGKT) provides a ligand contact to ATP. One can recognise a Lon proteolytic domain in the interval 592–773 (TNQIGQVIGL…EEVLKLSLEK (182 aa)). Catalysis depends on residues S679 and K722.

This sequence belongs to the peptidase S16 family. As to quaternary structure, homohexamer. Organized in a ring with a central cavity.

It is found in the cytoplasm. It carries out the reaction Hydrolysis of proteins in presence of ATP.. Its function is as follows. ATP-dependent serine protease that mediates the selective degradation of mutant and abnormal proteins as well as certain short-lived regulatory proteins. Required for cellular homeostasis and for survival from DNA damage and developmental changes induced by stress. Degrades polypeptides processively to yield small peptide fragments that are 5 to 10 amino acids long. Binds to DNA in a double-stranded, site-specific manner. The chain is Lon protease from Buchnera aphidicola subsp. Acyrthosiphon pisum (strain APS) (Acyrthosiphon pisum symbiotic bacterium).